We begin with the raw amino-acid sequence, 74 residues long: UPF0435 protein GWCH70_0415 (74 aa).

This sequence belongs to the UPF0435 family.

In Geobacillus sp. (strain WCH70), this protein is UPF0435 protein GWCH70_0415.